Consider the following 260-residue polypeptide: Neuraminyllactose-binding hemagglutinin (260 aa).

Residues Met-1–Gly-27 form the signal peptide. Cys-28 carries the N-palmitoyl cysteine lipid modification. Cys-28 is lipidated: S-diacylglycerol cysteine.

The protein resides in the cell outer membrane. This chain is Neuraminyllactose-binding hemagglutinin (hpaA), found in Helicobacter pylori (strain J99 / ATCC 700824) (Campylobacter pylori J99).